Reading from the N-terminus, the 247-residue chain is Phosphatidylserine decarboxylase proenzyme (247 aa).

Serine 206 acts as the Schiff-base intermediate with substrate; via pyruvic acid in catalysis. A Pyruvic acid (Ser); by autocatalysis modification is found at serine 206.

It belongs to the phosphatidylserine decarboxylase family. PSD-A subfamily. Heterodimer of a large membrane-associated beta subunit and a small pyruvoyl-containing alpha subunit. It depends on pyruvate as a cofactor. Is synthesized initially as an inactive proenzyme. Formation of the active enzyme involves a self-maturation process in which the active site pyruvoyl group is generated from an internal serine residue via an autocatalytic post-translational modification. Two non-identical subunits are generated from the proenzyme in this reaction, and the pyruvate is formed at the N-terminus of the alpha chain, which is derived from the carboxyl end of the proenzyme. The post-translation cleavage follows an unusual pathway, termed non-hydrolytic serinolysis, in which the side chain hydroxyl group of the serine supplies its oxygen atom to form the C-terminus of the beta chain, while the remainder of the serine residue undergoes an oxidative deamination to produce ammonia and the pyruvoyl prosthetic group on the alpha chain.

Its subcellular location is the cell membrane. It carries out the reaction a 1,2-diacyl-sn-glycero-3-phospho-L-serine + H(+) = a 1,2-diacyl-sn-glycero-3-phosphoethanolamine + CO2. Its pathway is phospholipid metabolism; phosphatidylethanolamine biosynthesis; phosphatidylethanolamine from CDP-diacylglycerol: step 2/2. Functionally, catalyzes the formation of phosphatidylethanolamine (PtdEtn) from phosphatidylserine (PtdSer). The chain is Phosphatidylserine decarboxylase proenzyme from Nitrobacter winogradskyi (strain ATCC 25391 / DSM 10237 / CIP 104748 / NCIMB 11846 / Nb-255).